Consider the following 320-residue polypeptide: Porphobilinogen deaminase (320 aa).

Position 241 is an S-(dipyrrolylmethanemethyl)cysteine (Cys-241).

This sequence belongs to the HMBS family. In terms of assembly, monomer. Requires dipyrromethane as cofactor.

The enzyme catalyses 4 porphobilinogen + H2O = hydroxymethylbilane + 4 NH4(+). It participates in porphyrin-containing compound metabolism; protoporphyrin-IX biosynthesis; coproporphyrinogen-III from 5-aminolevulinate: step 2/4. Tetrapolymerization of the monopyrrole PBG into the hydroxymethylbilane pre-uroporphyrinogen in several discrete steps. This chain is Porphobilinogen deaminase, found in Thermobifida fusca (strain YX).